The primary structure comprises 288 residues: 4-diphosphocytidyl-2-C-methyl-D-erythritol kinase (288 aa).

K8 is a catalytic residue. 92–102 provides a ligand contact to ATP; the sequence is PVAAGMAGGST. D134 is a catalytic residue.

The protein belongs to the GHMP kinase family. IspE subfamily.

The catalysed reaction is 4-CDP-2-C-methyl-D-erythritol + ATP = 4-CDP-2-C-methyl-D-erythritol 2-phosphate + ADP + H(+). The protein operates within isoprenoid biosynthesis; isopentenyl diphosphate biosynthesis via DXP pathway; isopentenyl diphosphate from 1-deoxy-D-xylulose 5-phosphate: step 3/6. Its function is as follows. Catalyzes the phosphorylation of the position 2 hydroxy group of 4-diphosphocytidyl-2C-methyl-D-erythritol. The protein is 4-diphosphocytidyl-2-C-methyl-D-erythritol kinase of Clostridium perfringens (strain SM101 / Type A).